The following is a 654-amino-acid chain: MGPTSPAARGQGRRWRPPPLPLLLPLSLLLLRAQLAVGNLAVGSPSAAEAPGSAQVAGLCGRLTLHRDLRTGRWEPDPQRSRRCLLDPQRVLEYCRQMYPELHIARVEQAAQAIPMERWCGGTRSGRCAHPHHEVVPFHCLPGEFVSEALLVPEGCRFLHQERMDQCESSTRRHQEAQEACSSQGLILHGSGMLLPCGSDRFRGVEYVCCPPPATPNPSGMAAGDPSTRSWPLGGRAEGGEDEEEVESFPQPVDDYFVEPPQAEEEEEEEEERAPPPSSHTPVMVSRVTPTPRPTDGVDVYFGMPGEIGEHEGFLRAKMDLEERRMRQINEVMREWAMADSQSKNLPKADRQALNEHFQSILQTLEEQVSGERQRLVETHATRVIALINDQRRAALEGFLAALQGDPPQAERVLMALRRYLRAEQKEQRHTLRHYQHVAAVDPEKAQQMRFQVQTHLQVIEERMNQSLGLLDQNPHLAQELRPQIQELLLAEHLGPSELDASVPGSSSEDKGSLQPPESKDDPPVTLPKGSTDQESSSSGREKLTPLEQYEQKVNASAPRGFPFHSSDIQRDELAPSGTGVSREALSGLLIMGAGGGSLIVLSLLLLRKKKPYGTISHGVVEVDPMLTLEEQQLRELQRHGYENPTYRFLEERP.

Residues 1-38 (MGPTSPAARGQGRRWRPPPLPLLLPLSLLLLRAQLAVG) form the signal peptide. The Extracellular portion of the chain corresponds to 39 to 584 (NLAVGSPSAA…APSGTGVSRE (546 aa)). The GFLD subdomain stretch occupies residues 50-146 (APGSAQVAGL…PFHCLPGEFV (97 aa)). Positions 50–212 (APGSAQVAGL…RGVEYVCCPP (163 aa)) constitute an E1 domain. Intrachain disulfides connect C60–C84, C95–C140, C120–C128, C156–C210, C167–C197, and C181–C209. A cuBD subdomain region spans residues 154–212 (EGCRFLHQERMDQCESSTRRHQEAQEACSSQGLILHGSGMLLPCGSDRFRGVEYVCCPP). H174 serves as a coordination point for Cu(2+). Zn(2+)-binding residues include E206, C209, and C210. Positions 214–297 (ATPNPSGMAA…VTPTPRPTDG (84 aa)) are disordered. Residues 262 to 272 (QAEEEEEEEEE) show a composition bias toward acidic residues. One can recognise an E2 domain in the interval 297–488 (GVDVYFGMPG…QELRPQIQEL (192 aa)). 2 heparin-binding regions span residues 314 to 346 (FLRAKMDLEERRMRQINEVMREWAMADSQSKNL) and 414 to 445 (LMALRRYLRAEQKEQRHTLRHYQHVAAVDPEK). The interval 446-463 (AQQMRFQVQTHLQVIEER) is collagen-binding. N465 carries N-linked (GlcNAc...) asparagine glycosylation. Residues 497 to 580 (SELDASVPGS…RDELAPSGTG (84 aa)) are disordered. Residues 508-523 (SEDKGSLQPPESKDDP) show a composition bias toward basic and acidic residues. The span at 529–539 (KGSTDQESSSS) shows a compositional bias: polar residues. N-linked (GlcNAc...) asparagine glycosylation is present at N555. Residue H565 participates in Cu(2+) binding. H565 contributes to the Zn(2+) binding site. A helical transmembrane segment spans residues 585–607 (ALSGLLIMGAGGGSLIVLSLLLL). The Basolateral sorting signal signature appears at 608 to 619 (RKKKPYGTISHG). The Cytoplasmic portion of the chain corresponds to 608–654 (RKKKPYGTISHGVVEVDPMLTLEEQQLRELQRHGYENPTYRFLEERP). The interval 636 to 652 (ELQRHGYENPTYRFLEE) is interaction with DAB1. The interaction with DAB2 stretch occupies residues 640-654 (HGYENPTYRFLEERP). Positions 644–647 (NPTY) match the NPXY motif; contains endocytosis signal motif.

This sequence belongs to the APP family. In terms of assembly, monomer and homodimer. Heparin binding promotes homodimerization. Binds, via its C-terminus, to the PID domain of several cytoplasmic proteins, including APBB and APBA family members, MAPK8IP1 and DAB1. Binding to Dab1 inhibits its serine phosphorylation. Interacts with CPEB1. Interacts (via NPXY motif) with DAB2 (via PID domain); the interaction is impaired by tyrosine phosphorylation of the NPXY motif. Interacts (via NPXY motif) with DAB1. Post-translationally, proteolytically cleaved by caspases during neuronal apoptosis. Cleaved, in vitro, at Asp-624 by caspase-3. N- and O-glycosylated.

It localises to the cell membrane. Its subcellular location is the cytoplasm. Functionally, may play a role in postsynaptic function. The C-terminal gamma-secretase processed fragment, ALID1, activates transcription activation through APBB1 (Fe65) binding. Couples to JIP signal transduction through C-terminal binding. May interact with cellular G-protein signaling pathways. Can regulate neurite outgrowth through binding to components of the extracellular matrix such as heparin and collagen I. The gamma-CTF peptide, C30, is a potent enhancer of neuronal apoptosis. The polypeptide is Amyloid beta precursor like protein 1 (Aplp1) (Mus musculus (Mouse)).